The chain runs to 185 residues: Ribosome-recycling factor (185 aa).

This sequence belongs to the RRF family.

The protein localises to the cytoplasm. In terms of biological role, responsible for the release of ribosomes from messenger RNA at the termination of protein biosynthesis. May increase the efficiency of translation by recycling ribosomes from one round of translation to another. This chain is Ribosome-recycling factor, found in Pelobacter propionicus (strain DSM 2379 / NBRC 103807 / OttBd1).